The sequence spans 322 residues: MMESGEALLKKLDGRLSGLRGRLTPDTGMDKITWFRAGGPAQVLFQPSDEEDLSAFLKAVPEEIPLLVVGIGSNLLVRDGGVPGFVVRLSAKGFGEVEQVCDTQLRAGAAAPDKRVAAAALEAGLAGFHFYHGIPGGIGGALRMNAGANGVETRERVVEVRALDRKGEVHVLSNADMGYAYRHSSASPDLIFTSVLFEGVPGERDDIRRAMDEVQHHRETVQPVREKTGGSTFKNPEGTSAWKEIDKAGCRGLRVGGAQMSEMHCNFMINTGNATGHDLETLGETVRARVFENSGIRLHWEIKRLGLFREGEQLEEFLGKII.

The region spanning 36-202 (RAGGPAQVLF…TSVLFEGVPG (167 aa)) is the FAD-binding PCMH-type domain. Residue arginine 182 is part of the active site. The active-site Proton donor is the serine 231. Residue glutamate 301 is part of the active site.

The protein belongs to the MurB family. FAD is required as a cofactor.

It localises to the cytoplasm. It catalyses the reaction UDP-N-acetyl-alpha-D-muramate + NADP(+) = UDP-N-acetyl-3-O-(1-carboxyvinyl)-alpha-D-glucosamine + NADPH + H(+). Its pathway is cell wall biogenesis; peptidoglycan biosynthesis. In terms of biological role, cell wall formation. The chain is UDP-N-acetylenolpyruvoylglucosamine reductase from Brucella suis (strain ATCC 23445 / NCTC 10510).